The chain runs to 362 residues: Biotin synthase (362 aa).

In terms of domain architecture, Radical SAM core spans 39–267; it reads NVVQVSTLLS…ETQVRLSAGR (229 aa). [4Fe-4S] cluster contacts are provided by Cys54, Cys58, and Cys61. Positions 98, 130, 190, and 262 each coordinate [2Fe-2S] cluster. Positions 317–362 are disordered; that stretch reads PFTKVSQPTTVEAKDSRYESLGEKPKWSRPSHTIEKNLELSGKGKN. Basic and acidic residues predominate over residues 328 to 354; that stretch reads EAKDSRYESLGEKPKWSRPSHTIEKNL.

It belongs to the radical SAM superfamily. Biotin synthase family. Homodimer. [4Fe-4S] cluster serves as cofactor. The cofactor is [2Fe-2S] cluster.

The enzyme catalyses (4R,5S)-dethiobiotin + (sulfur carrier)-SH + 2 reduced [2Fe-2S]-[ferredoxin] + 2 S-adenosyl-L-methionine = (sulfur carrier)-H + biotin + 2 5'-deoxyadenosine + 2 L-methionine + 2 oxidized [2Fe-2S]-[ferredoxin]. The protein operates within cofactor biosynthesis; biotin biosynthesis; biotin from 7,8-diaminononanoate: step 2/2. Functionally, catalyzes the conversion of dethiobiotin (DTB) to biotin by the insertion of a sulfur atom into dethiobiotin via a radical-based mechanism. The sequence is that of Biotin synthase from Flavobacterium psychrophilum (strain ATCC 49511 / DSM 21280 / CIP 103535 / JIP02/86).